The primary structure comprises 479 residues: MSIVVKNNIHWVGQRDWEVRDFHGTEYKTLRGSSYNSYLIREEKNVLIDTVDHKFSREFVQNLRNEIDLADIDYIVINHAEEDHAGALTELMAQIPDTPIYCTANAIDSINGHHHHPEWNFNVVKTGDTLDIGNGKQLIFVETPMLHWPDSMMTYLTGDAVLFSNDAFGQHYCDEHLFNDEVDQTELFEQCQRYYANILTPFSRLVTPKITEILGFNLPVDMIATSHGVVWRDNPTQIVELYLKWAADYQEDRITIFYDTMSNNTRMMADAIAQGIAETDPRVAVKIFNVARSDKNEILTNVFRSKGVLVGTSTMNNVMMPKIAGLVEEMTGLRFRNKRASAFGSHGWSGGAVDRLSTRLQDAGFEMSLSLKAKWRPDQDALELCREHGREIARQWALAPLPQSTVNTVVKEETSATTTADLGPRMQCSVCQWIYDPAKGEPMQDVAPGTPWSEVPDNFLCPECSLGKDVFEELASEAK.

The tract at residues 30-210 is zinc metallo-hydrolase; that stretch reads LRGSSYNSYL…PFSRLVTPKI (181 aa). Residues histidine 79, glutamate 81, aspartate 83, histidine 147, aspartate 166, and histidine 227 each coordinate Fe cation. The 140-residue stretch at 254–393 folds into the Flavodoxin-like domain; it reads ITIFYDTMSN…LCREHGREIA (140 aa). Residues 260–264 and 342–369 contribute to the FMN site; these read TMSNN and AFGSHGWSGGAVDRLSTRLQDAGFEMSL. The region spanning 423–474 is the Rubredoxin-like domain; sequence GPRMQCSVCQWIYDPAKGEPMQDVAPGTPWSEVPDNFLCPECSLGKDVFEEL. Fe cation contacts are provided by cysteine 428, cysteine 431, cysteine 461, and cysteine 464.

This sequence in the N-terminal section; belongs to the zinc metallo-hydrolase group 3 family. Homotetramer. The cofactor is Fe cation. FMN serves as cofactor.

It is found in the cytoplasm. Its pathway is nitrogen metabolism; nitric oxide reduction. Functionally, anaerobic nitric oxide reductase; uses NADH to detoxify nitric oxide (NO), protecting several 4Fe-4S NO-sensitive enzymes. Has at least 2 reductase partners, only one of which (NorW, flavorubredoxin reductase) has been identified. NO probably binds to the di-iron center; electrons enter from the NorW at rubredoxin and are transferred sequentially to the FMN center and the di-iron center. Also able to function as an aerobic oxygen reductase. In Escherichia coli O139:H28 (strain E24377A / ETEC), this protein is Anaerobic nitric oxide reductase flavorubredoxin.